A 736-amino-acid chain; its full sequence is Catalase-peroxidase 2 (736 aa).

The N-terminal stretch at 1-23 is a signal peptide; it reads MIKKTLPVLILLALSGSFSTAVA. The tryptophyl-tyrosyl-methioninium (Trp-Tyr) (with M-249) cross-link spans 102–223; the sequence is WHGAGTYRTY…LAATQMGLIY (122 aa). Histidine 103 (proton acceptor) is an active-site residue. The segment at residues 223 to 249 is a cross-link (tryptophyl-tyrosyl-methioninium (Tyr-Met) (with W-102)); sequence YVNPEGPGGKPDPLASAKDIREAFSRM. Histidine 264 is a heme b binding site.

This sequence belongs to the peroxidase family. Peroxidase/catalase subfamily. Homodimer or homotetramer. Heme b is required as a cofactor. Formation of the three residue Trp-Tyr-Met cross-link is important for the catalase, but not the peroxidase activity of the enzyme.

The protein localises to the periplasm. It catalyses the reaction H2O2 + AH2 = A + 2 H2O. The catalysed reaction is 2 H2O2 = O2 + 2 H2O. Functionally, bifunctional enzyme with both catalase and broad-spectrum peroxidase activity. The polypeptide is Catalase-peroxidase 2 (Escherichia coli O157:H7).